Reading from the N-terminus, the 251-residue chain is Plant UBX domain-containing protein 1 (251 aa).

M1 bears the N-acetylmethionine mark. The UBX domain occupies 104–180; it reads SKLTKAVIRV…GFVPGAIVYF (77 aa). The segment at 212 to 251 is disordered; sequence AVEPVESSSEPATVDSSAVPVEHERKSTEKKTTKPKWFKM. Over residues 217–227 the composition is skewed to polar residues; sequence ESSSEPATVDS. Residues 232–243 show a composition bias toward basic and acidic residues; sequence VEHERKSTEKKT.

Interacts with CDC48A (non-hexameric) via its UBX-containing C-terminal domain.

It is found in the cytoplasm. In terms of biological role, regulates CDC48A by inhibiting its ATPase activity and by promoting the disassembly of the active hexamer. This chain is Plant UBX domain-containing protein 1, found in Arabidopsis thaliana (Mouse-ear cress).